A 760-amino-acid chain; its full sequence is Rho GTPase-activating protein 26 (760 aa).

Residues 7 to 262 enclose the BAR domain; it reads EFSECCLDSP…MKENPHEHKN (256 aa). Residues 265–369 enclose the PH domain; sequence PYTMEGYLYV…WMEAMDGREP (105 aa). The 186-residue stretch at 383–568 folds into the Rho-GAP domain; that stretch reads AQLDSIGFSI…ILIENHEKIF (186 aa). Disordered stretches follow at residues 571–617 and 658–701; these read VPET…ESRN and PNRP…SPIS. Residues 605-617 are compositionally biased toward polar residues; that stretch reads HTAQPNEKQESRN. Low complexity predominate over residues 674-701; that stretch reads LSPSWPMFSAPSSPMPTSSTSSDSSPIS. The SH3 domain maps to 702-760; the sequence is SPLRKARALYACKAEHDSELSFTAGTVFDNVHPSQEPGWLEGTLNGKTGLIPENYVEFL.

Binds to the C-terminus of PTK2/FAK1. In terms of tissue distribution, detected in embryonic brain and liver, and at low levels in embryonic eye, heart, lung, intestine and skeletal muscle.

It localises to the cell junction. The protein localises to the focal adhesion. The protein resides in the cytoplasm. Its subcellular location is the cytoskeleton. It is found in the endosome membrane. In terms of biological role, GTPase-activating protein for RHOA and CDC42. May be involved in the regulation of neosynthesized protein export through a Rab-endososomal dependent export route. This Gallus gallus (Chicken) protein is Rho GTPase-activating protein 26 (ARHGAP26).